Reading from the N-terminus, the 170-residue chain is Lipoprotein signal peptidase (170 aa).

2 helical membrane passes run 71-91 and 97-116; these read YFFIGIAVVVSIFLIKLILEN and AIAYSLILGGAMGNLIDRVF. Active-site residues include D122 and D140. Residues 131-151 traverse the membrane as a helical segment; the sequence is WHWPAFNLADIAIVLGALLFV.

It belongs to the peptidase A8 family.

It localises to the cell inner membrane. It catalyses the reaction Release of signal peptides from bacterial membrane prolipoproteins. Hydrolyzes -Xaa-Yaa-Zaa-|-(S,diacylglyceryl)Cys-, in which Xaa is hydrophobic (preferably Leu), and Yaa (Ala or Ser) and Zaa (Gly or Ala) have small, neutral side chains.. The protein operates within protein modification; lipoprotein biosynthesis (signal peptide cleavage). Its function is as follows. This protein specifically catalyzes the removal of signal peptides from prolipoproteins. The chain is Lipoprotein signal peptidase from Serratia marcescens.